An 80-amino-acid chain; its full sequence is Cell division activator CedA (80 aa).

Belongs to the CedA family.

Activates the cell division inhibited by chromosomal DNA over-replication. The polypeptide is Cell division activator CedA (Escherichia coli O1:K1 / APEC).